Consider the following 331-residue polypeptide: Biotin synthase (331 aa).

Residues 53–271 (TELQLSQLLS…IAVARIVCPK (219 aa)) form the Radical SAM core domain. [4Fe-4S] cluster-binding residues include cysteine 68, cysteine 72, and cysteine 75. The [2Fe-2S] cluster site is built by cysteine 112, cysteine 143, cysteine 203, and arginine 275.

The protein belongs to the radical SAM superfamily. Biotin synthase family. As to quaternary structure, homodimer. Requires [4Fe-4S] cluster as cofactor. The cofactor is [2Fe-2S] cluster.

It catalyses the reaction (4R,5S)-dethiobiotin + (sulfur carrier)-SH + 2 reduced [2Fe-2S]-[ferredoxin] + 2 S-adenosyl-L-methionine = (sulfur carrier)-H + biotin + 2 5'-deoxyadenosine + 2 L-methionine + 2 oxidized [2Fe-2S]-[ferredoxin]. It participates in cofactor biosynthesis; biotin biosynthesis; biotin from 7,8-diaminononanoate: step 2/2. In terms of biological role, catalyzes the conversion of dethiobiotin (DTB) to biotin by the insertion of a sulfur atom into dethiobiotin via a radical-based mechanism. This is Biotin synthase from Phenylobacterium zucineum (strain HLK1).